An 823-amino-acid polypeptide reads, in one-letter code: Semaphorin-4B (823 aa).

Positions Met-1–Ala-30 are cleaved as a signal peptide. Residues Leu-31–Glu-703 are Extracellular-facing. Positions Arg-34–Val-510 constitute a Sema domain. Residues Asn-53, Asn-56, and Asn-83 are each glycosylated (N-linked (GlcNAc...) asparagine). Cys-107 and Cys-118 form a disulfide bridge. Asn-129 carries N-linked (GlcNAc...) asparagine glycosylation. 3 disulfide bridges follow: Cys-136-Cys-145, Cys-273-Cys-386, and Cys-297-Cys-346. Residues Asn-397 and Asn-512 are each glycosylated (N-linked (GlcNAc...) asparagine). In terms of domain architecture, PSI spans Asn-512–Lys-582. A disulfide bridge connects residues Cys-513 and Cys-530. 3 N-linked (GlcNAc...) asparagine glycosylation sites follow: Asn-567, Asn-615, and Asn-680. Residues Asn-589–Phe-649 form the Ig-like C2-type domain. A disulfide bridge connects residues Cys-596 and Cys-642. The chain crosses the membrane as a helical span at residues Phe-704–Tyr-724. At Arg-725–Val-823 the chain is on the cytoplasmic side. Phosphoserine is present on residues Ser-779, Ser-780, Ser-804, and Ser-816.

Belongs to the semaphorin family. In terms of assembly, interacts with GIPC PDZ domain.

The protein resides in the membrane. Its function is as follows. Inhibits axonal extension by providing local signals to specify territories inaccessible for growing axons. In Mus musculus (Mouse), this protein is Semaphorin-4B.